The following is a 366-amino-acid chain: Lysophosphatidic acid receptor 1-B (366 aa).

The Extracellular portion of the chain corresponds to 1 to 52; the sequence is MTSLSEFVSEPIGMMSQTSAASESQCYYNETIAFFYNRSGKYLDTEWNAVSK. Disulfide bonds link Cys-26–Cys-192 and Cys-190–Cys-197. N-linked (GlcNAc...) asparagine glycosylation is found at Asn-29 and Asn-37. Lys-41 is a binding site for a 1-acyl-sn-glycero-3-phosphate. Residues 53–77 form a helical membrane-spanning segment; sequence LVMGLGITVCIFIMLANLLVMVAIY. Residues 78-85 lie on the Cytoplasmic side of the membrane; it reads VNRRFHFP. Residues 86–109 traverse the membrane as a helical segment; the sequence is IYYLMANLAAADFFAGLAYFYLMF. Residues 110–123 are Extracellular-facing; that stretch reads NTGPNTRRLTVSTW. A helical transmembrane segment spans residues 124 to 146; sequence LLRQGLIDTSLTASVANLLAIAI. 126 to 131 contacts a 1-acyl-sn-glycero-3-phosphate; that stretch reads RQGLID. Residues 147–165 lie on the Cytoplasmic side of the membrane; it reads ERHITVFRMQLHTRMSNRR. Residues 166-186 traverse the membrane as a helical segment; that stretch reads VVVVIVVIWTVAIVMGAIPSV. The Extracellular segment spans residues 187–206; it reads GWNCICDLEHCSNMAPLYSD. A helical transmembrane segment spans residues 207-227; the sequence is SYLIFWTIFNLVTFVVMVVLY. An a 1-acyl-sn-glycero-3-phosphate-binding site is contributed by Trp-212. The Cytoplasmic segment spans residues 228-257; that stretch reads AHIFVYVRQRTMRMSRHSSGPRRNRDTMMS. A helical membrane pass occupies residues 258-282; the sequence is LLKTVVIVLGAFIVCWTPGLVLLLL. Residues 283–296 lie on the Extracellular side of the membrane; that stretch reads DVCCPQCNILAYEK. The cysteines at positions 286 and 289 are disulfide-linked. Residues 297-317 traverse the membrane as a helical segment; it reads FFLLLAEFNSAMNPIIYSYRD. The Cytoplasmic portion of the chain corresponds to 318–366; that stretch reads KEMSATFKQILCCQRTENVNGPTEGSDRSASSLNHTILAGVHSNDHSVV.

It belongs to the G-protein coupled receptor 1 family. In terms of tissue distribution, expressed at high levels in oocytes and at lower levels in brain and spinal cord. Below detection level in lung, heart, kidney, liver, muscle, stomach, and intestine.

It localises to the cell surface. The protein resides in the cell membrane. The protein localises to the endosome. Its function is as follows. Receptor for lysophosphatidic acid (LPA). Plays a role in the reorganization of the actin cytoskeleton, cell migration, differentiation and proliferation, and thereby contributes to the responses to tissue damage and infectious agents. Activates downstream signaling cascades via the G(i)/G(o), G(12)/G(13), and G(q) families of heteromeric G proteins. Signaling inhibits adenylyl cyclase activity and decreases cellular cAMP levels. Signaling triggers an increase of cytoplasmic Ca(2+) levels. Signaling leads to the activation of phospholipase C (PLC) and the formation of inositol 1,4,5-trisphosphate. Signaling mediates activation of down-stream MAP kinases. Contributes to the regulation of cell shape. Promotes Rho-dependent reorganization of the actin cytoskeleton in neuronal cells and neurite retraction. Promotes the activation of Rho and the formation of actin stress fibers. Promotes formation of lamellipodia at the leading edge of migrating cells via activation of Rac. Through its function as lysophosphatidic acid receptor, plays a role in chemotaxis and cell migration, including responses to injury and wounding. Promotes cell proliferation in response to lysophosphatidic acid. The sequence is that of Lysophosphatidic acid receptor 1-B (lpar1-b) from Xenopus laevis (African clawed frog).